The chain runs to 316 residues: Phospho-N-acetylmuramoyl-pentapeptide-transferase (316 aa).

10 helical membrane passes run Ile-5 to Pro-25, Gly-49 to Phe-69, Leu-76 to Leu-96, Phe-116 to Phe-136, Thr-141 to Val-161, Gly-172 to Leu-192, Ile-195 to Leu-212, Ile-221 to Leu-241, Leu-244 to Ile-264, and Val-296 to Ser-316.

It belongs to the glycosyltransferase 4 family. MraY subfamily. It depends on Mg(2+) as a cofactor.

The protein localises to the cell membrane. It catalyses the reaction UDP-N-acetyl-alpha-D-muramoyl-L-alanyl-gamma-D-glutamyl-meso-2,6-diaminopimeloyl-D-alanyl-D-alanine + di-trans,octa-cis-undecaprenyl phosphate = di-trans,octa-cis-undecaprenyl diphospho-N-acetyl-alpha-D-muramoyl-L-alanyl-D-glutamyl-meso-2,6-diaminopimeloyl-D-alanyl-D-alanine + UMP. Its pathway is cell wall biogenesis; peptidoglycan biosynthesis. Functionally, catalyzes the initial step of the lipid cycle reactions in the biosynthesis of the cell wall peptidoglycan: transfers peptidoglycan precursor phospho-MurNAc-pentapeptide from UDP-MurNAc-pentapeptide onto the lipid carrier undecaprenyl phosphate, yielding undecaprenyl-pyrophosphoryl-MurNAc-pentapeptide, known as lipid I. The protein is Phospho-N-acetylmuramoyl-pentapeptide-transferase of Thermoanaerobacter pseudethanolicus (strain ATCC 33223 / 39E) (Clostridium thermohydrosulfuricum).